Here is a 30-residue protein sequence, read N- to C-terminus: MATKHGKNSWKTLYLKISFLGCKVVVLLKR.

This sequence belongs to the AapA toxin family.

It localises to the cell inner membrane. Transcription of the aapA1 gene generates a full-length transcript whose folding impedes translation. Processing of the 3' end of the aapA1 message generates a shorter transcript that becomes translatable after a structural rearrangement. The processing also makes it more susceptible to forming dsRNA with IsoA1 which leads to duplex RNA degradation by RNase 3 (rnc). May be involved in response to oxidative stress. Toxic component of a type I toxin-antitoxin (TA) system. When overexpression is induced in situ in the absence of its cognate antisense RNA antitoxin IsoA1 it leads to cell growth arrest and cell death without lysis. Neutralized by IsoA1 RNA which forms an extensive duplex with the mRNA. Binds artificial prokaryotic and eukaryotic lipid membranes, with 30-fold higher affinity for prokaryotic membranes. Molecular dynamics suggests the peptide penetrates the membrane leading to lipid reorganization and thinning of the bilayer. Induction of toxin in the absence of antitoxin RNA causes a fast conversion of cells from spiral-shaped to coccoid forms; cells have no visible membrane defects and resemble wild-type 'aging coccoids'. Toxin causes a moderate decrease in membrane potential and ATP content and alterations in peptidoglycan muropeptide abundance; GlcNAc-MurNAc dipeptides increase while GlcNAc-MurNAc tripeptides decrease (i.e. a faster phenocopy of cell aging). Deletion of all 6 AapA/IsoA TA loci in strain B128 leads to slower than wild-type conversion of H2O2-treated cells to the coccoid form. This suggests oxidative stress triggers coccoid transformation via these type I TA systems, although other factors eventually drive the morphology change. The protein is Toxic protein AapA1 of Helicobacter pylori (strain ATCC 700392 / 26695) (Campylobacter pylori).